The chain runs to 294 residues: Ribosomal protein L11 methyltransferase (294 aa).

Residues Thr144, Gly165, Asp187, and Asn229 each contribute to the S-adenosyl-L-methionine site.

The protein belongs to the methyltransferase superfamily. PrmA family.

It is found in the cytoplasm. The enzyme catalyses L-lysyl-[protein] + 3 S-adenosyl-L-methionine = N(6),N(6),N(6)-trimethyl-L-lysyl-[protein] + 3 S-adenosyl-L-homocysteine + 3 H(+). Functionally, methylates ribosomal protein L11. This Cellvibrio japonicus (strain Ueda107) (Pseudomonas fluorescens subsp. cellulosa) protein is Ribosomal protein L11 methyltransferase.